A 136-amino-acid chain; its full sequence is Nanos homolog 2 (136 aa).

Residues 27 to 51 (KQRQEGEVAEEPNSRPQEKSEQDLE) are disordered. The segment covering 28–48 (QRQEGEVAEEPNSRPQEKSEQ) has biased composition (basic and acidic residues). The Nanos-type zinc-finger motif lies at 60 to 114 (ICNFCKHNGESRHVYTSHQLKTPEGVVVCPILRHYVCPLCGATGDQAHTLKYCPL). Residues C61, C64, H77, C88, C96, C99, H107, and C112 each contribute to the Zn(2+) site. 2 short sequence motifs (C2HC) span residues 61-88 (CNFC…VVVC) and 96-112 (CPLC…LKYC).

This sequence belongs to the nanos family. As to quaternary structure, interacts with CNOT1, CNOT3, CNOT6L, CNOT7 and CNOT9. As to expression, predominantly expressed in male germ cells. Expressed in self-renewing spermatogonial stem cells and developing gonads.

It is found in the cytoplasm. It localises to the P-body. Its subcellular location is the perinuclear region. Plays a key role in the sexual differentiation of germ cells by promoting the male fate but suppressing the female fate. Represses the female fate pathways by suppressing meiosis, which in turn results in the promotion of the male fate. Maintains the suppression of meiosis by preventing STRA8 expression, which is required for premeiotic DNA replication, after CYP26B1 is decreased. Regulates the localization of the CCR4-NOT deadenylation complex to P-bodies and plays a role in recruiting the complex to trigger the degradation of mRNAs involved in meiosis. Required for the maintenance of the spermatogonial stem cell population. Not essential for the assembly of P-bodies but is required for the maintenance of their normal state. The polypeptide is Nanos homolog 2 (Nanos2) (Mus musculus (Mouse)).